Here is a 128-residue protein sequence, read N- to C-terminus: Con-Ins F1 (128 aa).

Residues 1–24 (MTTSSYFLLVTLGLLLYVCRSSFG) form the signal peptide. Intrachain disulfides connect Cys29-Cys104, Cys41-Cys107, Cys53-Cys120, and Cys106-Cys111. Positions 59–89 (LQGGTGKKRGRASPLRKRRAFLSMLKARAKR) are cleaved as a propeptide — c peptide. The residue at position 115 (Glu115) is a 4-carboxyglutamate; partial. At Ser127 the chain carries Serine amide.

The protein belongs to the insulin family. In terms of assembly, heterodimer of A and B chains; disulfide-linked. As to expression, expressed by the venom gland.

The protein localises to the secreted. Its function is as follows. This venom insulin facilitates prey capture by rapidly inducing hypoglycemic shock. Intraperitoneal injection of this peptide into zebrafish lowers blood glucose with the same potency than human insulin. In vivo, when applied to water, this peptide reduces overall locomotor activity of zebrafish larvae, observed as a significant decrease in the percentage of time spent swimming and movement frequency. The chain is Con-Ins F1 from Conus floridulus (Cone snail).